Here is an 88-residue protein sequence, read N- to C-terminus: Large ribosomal subunit protein bL31B (88 aa).

It belongs to the bacterial ribosomal protein bL31 family. Type B subfamily. In terms of assembly, part of the 50S ribosomal subunit.

In Glaesserella parasuis serovar 5 (strain SH0165) (Haemophilus parasuis), this protein is Large ribosomal subunit protein bL31B.